Consider the following 332-residue polypeptide: Aquaporin Lacbi1:317173 (332 aa).

The segment covering 1–20 (MSGQHQITEQSSRNPLSRVS) has biased composition (polar residues). Positions 1–45 (MSGQHQITEQSSRNPLSRVSTLLPEKPLSPTSTYAGTQKHPEAPR) are disordered. The Cytoplasmic portion of the chain corresponds to 1–66 (MSGQHQITEQ…RNAIRKPMAE (66 aa)). A helical membrane pass occupies residues 67-87 (FFGVALLIIFGAGSACQVVLS). Topologically, residues 88–100 (TNPDVASSARGSF) are extracellular. The chain crosses the membrane as a helical span at residues 101–121 (LSINFGWAIGIAMGVWVSGGI). The Cytoplasmic segment spans residues 122–144 (SGGHINPAITIAMATYRGFPWRK). Residues 127-129 (NPA) carry the NPA 1 motif. A helical membrane pass occupies residues 145-165 (VPSYILAQVLGGVVGAGLVYA). Residues 166 to 199 (NYIHAIDIFEGGHHIRTQATASLFATYALPYMTQ) lie on the Extracellular side of the membrane. The helical transmembrane segment at 200 to 220 (ASCFFSEFLATAVLSMMVFAL) threads the bilayer. Residues 221 to 230 (TDKRNHSPTN) are Cytoplasmic-facing. Residues 231-251 (GLLPFALFILFVGLGASLGME) traverse the membrane as a helical segment. The Extracellular portion of the chain corresponds to 252–283 (TAYALNPARDFGPRLFLAMAGYGKALFNYRSQ). The NPA 2 signature appears at 257–259 (NPA). Residues 284 to 304 (YWLWAPIIAPVLGAQAGGLLY) form a helical membrane-spanning segment. Residues 305-332 (DTFLNDGDNSPIKWRCASSQEHQLAEVV) are Cytoplasmic-facing.

This sequence belongs to the MIP/aquaporin (TC 1.A.8) family.

It is found in the membrane. The enzyme catalyses H2O(in) = H2O(out). The catalysed reaction is NH4(+)(in) = NH4(+)(out). Functionally, water channel required to facilitate the transport of water across membranes. Acts as the most efficient Laccaria water channel. In addition to water, also shows strong ammonium transport activity. May be involved in fungal nitrogen (ammonium) support of the plant host in symbiosis. The protein is Aquaporin Lacbi1:317173 of Laccaria bicolor (strain S238N-H82 / ATCC MYA-4686) (Bicoloured deceiver).